The following is a 325-amino-acid chain: Ribonucleoside-diphosphate reductase small chain (325 aa).

Fe cation contacts are provided by Asp-76, Glu-107, and His-110. Tyr-114 is a catalytic residue. Residues Glu-170, Glu-204, and His-207 each coordinate Fe cation.

The protein belongs to the ribonucleoside diphosphate reductase small chain family. As to quaternary structure, heterodimer of a large and a small subunit. It depends on Fe cation as a cofactor.

The enzyme catalyses a 2'-deoxyribonucleoside 5'-diphosphate + [thioredoxin]-disulfide + H2O = a ribonucleoside 5'-diphosphate + [thioredoxin]-dithiol. Its function is as follows. Provides the precursors necessary for DNA synthesis. Catalyzes the biosynthesis of deoxyribonucleotides from the corresponding ribonucleotides. In Encephalitozoon cuniculi (strain GB-M1) (Microsporidian parasite), this protein is Ribonucleoside-diphosphate reductase small chain.